A 418-amino-acid polypeptide reads, in one-letter code: Histidine--tRNA ligase (418 aa).

Belongs to the class-II aminoacyl-tRNA synthetase family.

Its subcellular location is the cytoplasm. The enzyme catalyses tRNA(His) + L-histidine + ATP = L-histidyl-tRNA(His) + AMP + diphosphate + H(+). The polypeptide is Histidine--tRNA ligase (Methanococcus maripaludis (strain C6 / ATCC BAA-1332)).